The sequence spans 155 residues: Transcriptional repressor NrdR (155 aa).

A zinc finger lies at 3–34 (CPYCGHLEDRVVDSRETQDGQATRRRRACLSC). Positions 49-139 (PQVVKKDGRR…VYRAFRDVGE (91 aa)) constitute an ATP-cone domain.

This sequence belongs to the NrdR family. Zn(2+) serves as cofactor.

Functionally, negatively regulates transcription of bacterial ribonucleotide reductase nrd genes and operons by binding to NrdR-boxes. The chain is Transcriptional repressor NrdR from Anaeromyxobacter sp. (strain K).